The following is a 299-amino-acid chain: 6-phosphogluconate dehydrogenase, NAD(+)-dependent, decarboxylating (299 aa).

Residues 7–12 (GLGRMG), 67–69 (VPA), and N95 contribute to the NAD(+) site. Substrate-binding residues include N95, S118, and G120. K169 (proton acceptor) is an active-site residue. 172 to 173 (HN) serves as a coordination point for substrate. Residue E176 is the Proton donor of the active site. Substrate contacts are provided by Y177 and R268.

It belongs to the 6-phosphogluconate dehydrogenase family. As to quaternary structure, homotetramer.

It carries out the reaction 6-phospho-D-gluconate + NAD(+) = D-ribulose 5-phosphate + CO2 + NADH. It participates in carbohydrate degradation; pentose phosphate pathway. Functionally, catalyzes the oxidative decarboxylation of 6-phosphogluconate to ribulose 5-phosphate and CO(2), with concomitant reduction of NAD to NADH. The polypeptide is 6-phosphogluconate dehydrogenase, NAD(+)-dependent, decarboxylating (Haloferax volcanii (strain ATCC 29605 / DSM 3757 / JCM 8879 / NBRC 14742 / NCIMB 2012 / VKM B-1768 / DS2) (Halobacterium volcanii)).